Consider the following 230-residue polypeptide: Ribonuclease 3 (230 aa).

The region spanning 6 to 135 (TTELKERYGI…FLGALYLDQK (130 aa)) is the RNase III domain. Glutamate 48 lines the Mg(2+) pocket. The active site involves aspartate 52. Mg(2+)-binding residues include aspartate 121 and glutamate 124. The active site involves glutamate 124. The DRBM domain occupies 161 to 230 (DHKTQLQEVL…AERALKSIPQ (70 aa)).

Belongs to the ribonuclease III family. As to quaternary structure, homodimer. The cofactor is Mg(2+).

The protein resides in the cytoplasm. The catalysed reaction is Endonucleolytic cleavage to 5'-phosphomonoester.. In terms of biological role, digests double-stranded RNA. Involved in the processing of primary rRNA transcript to yield the immediate precursors to the large and small rRNAs (23S and 16S). Processes some mRNAs, and tRNAs when they are encoded in the rRNA operon. Processes pre-crRNA and tracrRNA of type II CRISPR loci if present in the organism. The sequence is that of Ribonuclease 3 from Enterococcus faecalis (strain ATCC 700802 / V583).